A 248-amino-acid chain; its full sequence is Sugar fermentation stimulation protein homolog (248 aa).

Belongs to the SfsA family.

The chain is Sugar fermentation stimulation protein homolog from Methylorubrum extorquens (strain CM4 / NCIMB 13688) (Methylobacterium extorquens).